The following is a 374-amino-acid chain: Alginate lyase (374 aa).

The signal sequence occupies residues 1–26 (MRNPKLKNLLAPTLLSLAMFAGATQA). Residues 67–68 (SK), 140–141 (HT), and Tyr-258 contribute to the substrate site.

It belongs to the polysaccharide lyase 5 family.

The protein resides in the periplasm. It carries out the reaction Eliminative cleavage of alginate to give oligosaccharides with 4-deoxy-alpha-L-erythro-hex-4-enuronosyl groups at their non-reducing ends and beta-D-mannuronate at their reducing end.. Catalyzes the depolymerization of alginate by cleaving the beta-1,4 glycosidic bond between two adjacent sugar residues via a beta-elimination mechanism. May serve to degrade mislocalized alginate that is trapped in the periplasmic space. This chain is Alginate lyase, found in Cobetia marina (Deleya marina).